The chain runs to 149 residues: 6,7-dimethyl-8-ribityllumazine synthase (149 aa).

5-amino-6-(D-ribitylamino)uracil is bound by residues F22, 56–58 (ALE), and 80–82 (AVI). 85-86 (ET) lines the (2S)-2-hydroxy-3-oxobutyl phosphate pocket. H88 (proton donor) is an active-site residue. N113 is a 5-amino-6-(D-ribitylamino)uracil binding site. R127 is a binding site for (2S)-2-hydroxy-3-oxobutyl phosphate.

It belongs to the DMRL synthase family.

It carries out the reaction (2S)-2-hydroxy-3-oxobutyl phosphate + 5-amino-6-(D-ribitylamino)uracil = 6,7-dimethyl-8-(1-D-ribityl)lumazine + phosphate + 2 H2O + H(+). The protein operates within cofactor biosynthesis; riboflavin biosynthesis; riboflavin from 2-hydroxy-3-oxobutyl phosphate and 5-amino-6-(D-ribitylamino)uracil: step 1/2. Functionally, catalyzes the formation of 6,7-dimethyl-8-ribityllumazine by condensation of 5-amino-6-(D-ribitylamino)uracil with 3,4-dihydroxy-2-butanone 4-phosphate. This is the penultimate step in the biosynthesis of riboflavin. The protein is 6,7-dimethyl-8-ribityllumazine synthase of Methylobacillus flagellatus (strain ATCC 51484 / DSM 6875 / VKM B-1610 / KT).